The sequence spans 116 residues: UPF0127 protein PF1050 (116 aa).

Belongs to the UPF0127 family.

The protein is UPF0127 protein PF1050 of Pyrococcus furiosus (strain ATCC 43587 / DSM 3638 / JCM 8422 / Vc1).